Here is a 6995-residue protein sequence, read N- to C-terminus: Fibrous sheath-interacting protein 2 (6995 aa).

Disordered regions lie at residues glutamate 273–glutamine 292, aspartate 308–lysine 336, and glycine 351–proline 476. Polar residues predominate over residues threonine 359 to serine 396. Over residues glutamate 397–arginine 421 the composition is skewed to basic and acidic residues. A compositionally biased stretch (polar residues) spans isoleucine 424–leucine 442. Position 430 is a phosphoserine (serine 430). The segment covering aspartate 443–lysine 452 has biased composition (basic and acidic residues). Polar residues predominate over residues serine 453–serine 463. Positions leucine 665 to lysine 692 form a coiled coil. Disordered regions lie at residues proline 1452–threonine 1472, lysine 2554–methionine 2595, threonine 2699–valine 2731, proline 3182–threonine 3270, glycine 5489–glycine 5665, serine 5719–lysine 5740, lysine 5823–lysine 5878, lysine 5943–leucine 5996, and serine 6973–arginine 6995. The segment covering serine 2555–serine 2565 has biased composition (basic and acidic residues). A compositionally biased stretch (polar residues) spans proline 3187–valine 3204. Residues serine 3220–serine 3231 are compositionally biased toward low complexity. Over residues cysteine 3232–alanine 3250 the composition is skewed to polar residues. The span at serine 3255–arginine 3265 shows a compositional bias: basic residues. The span at aspartate 5496 to threonine 5509 shows a compositional bias: basic and acidic residues. Polar residues-rich tracts occupy residues methionine 5523–threonine 5557, glutamine 5565–methionine 5625, and valine 5638–lysine 5650. 2 stretches are compositionally biased toward basic and acidic residues: residues serine 5719 to threonine 5738 and glycine 5829 to serine 5877. A compositionally biased stretch (polar residues) spans serine 5982 to proline 5993. The span at serine 6977–arginine 6995 shows a compositional bias: low complexity.

As to quaternary structure, may interact with AKAP4. In terms of tissue distribution, predominantly expressed in testis.

Its function is as follows. Plays a role in spermatogenesis. This is Fibrous sheath-interacting protein 2 (Fsip2) from Mus musculus (Mouse).